We begin with the raw amino-acid sequence, 261 residues long: tRNA pseudouridine synthase A (261 aa).

Aspartate 51 acts as the Nucleophile in catalysis. Substrate is bound at residue tyrosine 109.

It belongs to the tRNA pseudouridine synthase TruA family. As to quaternary structure, homodimer.

The catalysed reaction is uridine(38/39/40) in tRNA = pseudouridine(38/39/40) in tRNA. Its function is as follows. Formation of pseudouridine at positions 38, 39 and 40 in the anticodon stem and loop of transfer RNAs. The chain is tRNA pseudouridine synthase A from Shewanella denitrificans (strain OS217 / ATCC BAA-1090 / DSM 15013).